We begin with the raw amino-acid sequence, 186 residues long: Superoxide dismutase [Cu-Zn] (186 aa).

The signal sequence occupies residues 1–20; that stretch reads MKKTVLALMFSCGMVASAFA. Cu cation contacts are provided by His-79, His-81, and His-104. Cys-86 and Cys-182 are oxidised to a cystine. Zn(2+) contacts are provided by His-104, His-113, His-122, and Asp-125. His-160 provides a ligand contact to Cu cation.

This sequence belongs to the Cu-Zn superoxide dismutase family. Homodimer. The cofactor is Cu cation. Zn(2+) serves as cofactor.

It localises to the periplasm. The enzyme catalyses 2 superoxide + 2 H(+) = H2O2 + O2. In terms of biological role, destroys radicals which are normally produced within the cells and which are toxic to biological systems. This is Superoxide dismutase [Cu-Zn] (sodC) from Pasteurella multocida (strain Pm70).